The primary structure comprises 242 residues: Myogenic factor 6 (242 aa).

The disordered stretch occupies residues 31 to 63; the sequence is SPLYPGSDGTLSPCQDQMPQEAGSDSSGEEHVL. Over residues 39–56 the composition is skewed to polar residues; it reads GTLSPCQDQMPQEAGSDS. The region spanning 93–144 is the bHLH domain; that stretch reads DRRKAATLRERRRLKKINEAFEALKRRTVANPNQRLPKVEILRSAISYIERL.

As to quaternary structure, efficient DNA binding requires dimerization with another bHLH protein. Interacts with CSRP3. As to expression, skeletal muscle.

It localises to the nucleus. Its function is as follows. Involved in muscle differentiation (myogenic factor). Induces fibroblasts to differentiate into myoblasts. Probable sequence specific DNA-binding protein. The polypeptide is Myogenic factor 6 (Myf6) (Mus musculus (Mouse)).